A 933-amino-acid polypeptide reads, in one-letter code: MSLNTRANIIPEKNTPNEKDYPLREDIRLLGRMLGDTIRELEGETMFNLVETIRQTSVRFRRDQDEAAEHELDTILNHLSHKETIAVVRAFSYFSLLSNIAEDLHHNRRRRAHLRAGSPPQDGSVTLALQRVVKKGIDAEQLQNFFASALISPVLTAHPTEVQRRSILDYQLKIQRLLKERDRTQLTPNEMRHNEEDLRSAIQTLWQTRVLRSVRLTVQDEIENGLIYYHYTFLRQIPYIYAKLEDILERHMDKAAPRIASFLRIGSWIGGDRDGNPFVTHQIMLHAAERHSALILDFYISEVERIGQTMSLSERLIKVSSDLEGLASTAPGLPASRIDEPYRRVFLGIHARLIATSRHLGSSIRGCCQENNAEPYADSAEFVHDLDIVIRSLRQHRSDRLAQGALRDLRRAADVFGFHLAPLDMRQHSKIHEQVISELYEKNTRDDRNYLEMSRSERVEWLLAELRHPRSLVTSFSDFSDVTQGELRILKMAAEIQRRFGHAALPNYIISMATGVVHILEVALLLKEAGLLQFGDDPRSTVNIIPLFETIDDLRGCASVMDELFSLPDYRKLLLSRDNLQEVMLGYSDSNKDGGFVTSNWEIYKAEIELTRVFDRHGVRLRLFHGRGGTVGRGGGPSYQGILAQPPGSVSGQIRLTEQGEVIASKYTDPEIGRRNLETLVAATIESTLLDRDAVHYHAPHYHQIMEELSSSACAAYRDLVYKTPGFKQFFLESTPIREIAGLHIGSRPTSRKPSDKIEDLRAIPWVFSWSLNRTMIPGWYGFGTAVENFVQQAGNEQEALKQLQEMYRTWPFLQTLLSNMDMVLSKSDLGIASRYAELVTDPELRQSVFTSIRTEWELCMKWLFAITGYSELLQDNPTLARSIRIRTPYIDPLNHLQIELLRRYRSGDDDDTVRRAIHLTINGVATGLRNSG.

Active-site residues include His158 and Lys592.

This sequence belongs to the PEPCase type 1 family. Mg(2+) serves as cofactor.

It catalyses the reaction oxaloacetate + phosphate = phosphoenolpyruvate + hydrogencarbonate. Its function is as follows. Forms oxaloacetate, a four-carbon dicarboxylic acid source for the tricarboxylic acid cycle. This Nitrosomonas europaea (strain ATCC 19718 / CIP 103999 / KCTC 2705 / NBRC 14298) protein is Phosphoenolpyruvate carboxylase.